A 467-amino-acid chain; its full sequence is Ribulose bisphosphate carboxylase large chain (467 aa).

The propeptide occupies 1-2; it reads MS. Proline 3 carries the post-translational modification N-acetylproline. The residue at position 14 (lysine 14) is an N6,N6,N6-trimethyllysine. Substrate-binding residues include asparagine 123 and threonine 173. Lysine 175 serves as the catalytic Proton acceptor. Residue lysine 177 participates in substrate binding. Positions 201, 203, and 204 each coordinate Mg(2+). The residue at position 201 (lysine 201) is an N6-carboxylysine. Histidine 294 acts as the Proton acceptor in catalysis. Residues arginine 295, histidine 327, and serine 379 each contribute to the substrate site.

The protein belongs to the RuBisCO large chain family. Type I subfamily. Heterohexadecamer of 8 large chains and 8 small chains; disulfide-linked. The disulfide link is formed within the large subunit homodimers. Mg(2+) serves as cofactor. The disulfide bond which can form in the large chain dimeric partners within the hexadecamer appears to be associated with oxidative stress and protein turnover.

The protein localises to the plastid. Its subcellular location is the chloroplast. It catalyses the reaction 2 (2R)-3-phosphoglycerate + 2 H(+) = D-ribulose 1,5-bisphosphate + CO2 + H2O. The catalysed reaction is D-ribulose 1,5-bisphosphate + O2 = 2-phosphoglycolate + (2R)-3-phosphoglycerate + 2 H(+). Its function is as follows. RuBisCO catalyzes two reactions: the carboxylation of D-ribulose 1,5-bisphosphate, the primary event in carbon dioxide fixation, as well as the oxidative fragmentation of the pentose substrate in the photorespiration process. Both reactions occur simultaneously and in competition at the same active site. This Calamus usitatus (Palm tree) protein is Ribulose bisphosphate carboxylase large chain.